The sequence spans 203 residues: Large ribosomal subunit protein bL25 (203 aa).

Belongs to the bacterial ribosomal protein bL25 family. CTC subfamily. In terms of assembly, part of the 50S ribosomal subunit; part of the 5S rRNA/L5/L18/L25 subcomplex. Contacts the 5S rRNA. Binds to the 5S rRNA independently of L5 and L18.

Its function is as follows. This is one of the proteins that binds to the 5S RNA in the ribosome where it forms part of the central protuberance. This Cupriavidus pinatubonensis (strain JMP 134 / LMG 1197) (Cupriavidus necator (strain JMP 134)) protein is Large ribosomal subunit protein bL25.